The chain runs to 122 residues: Immunoglobulin lambda variable 4-3 (122 aa).

Positions M1–A19 are cleaved as a signal peptide. The interval L20–S44 is framework-1. The 102-residue stretch at P21–G122 folds into the Ig-like domain. C41 and C111 are disulfide-bonded. The complementarity-determining-1 stretch occupies residues S45 to T51. The interval I52 to K68 is framework-2. Residues V69 to H75 are complementarity-determining-2. Residues S76–C111 are framework-3. The interval G112–G122 is complementarity-determining-3.

In terms of assembly, immunoglobulins are composed of two identical heavy chains and two identical light chains; disulfide-linked.

It is found in the secreted. The protein localises to the cell membrane. V region of the variable domain of immunoglobulin light chains that participates in the antigen recognition. Immunoglobulins, also known as antibodies, are membrane-bound or secreted glycoproteins produced by B lymphocytes. In the recognition phase of humoral immunity, the membrane-bound immunoglobulins serve as receptors which, upon binding of a specific antigen, trigger the clonal expansion and differentiation of B lymphocytes into immunoglobulins-secreting plasma cells. Secreted immunoglobulins mediate the effector phase of humoral immunity, which results in the elimination of bound antigens. The antigen binding site is formed by the variable domain of one heavy chain, together with that of its associated light chain. Thus, each immunoglobulin has two antigen binding sites with remarkable affinity for a particular antigen. The variable domains are assembled by a process called V-(D)-J rearrangement and can then be subjected to somatic hypermutations which, after exposure to antigen and selection, allow affinity maturation for a particular antigen. The polypeptide is Immunoglobulin lambda variable 4-3 (Homo sapiens (Human)).